Consider the following 417-residue polypeptide: 3-isopropylmalate dehydratase large subunit 2 (417 aa).

3 residues coordinate [4Fe-4S] cluster: C298, C358, and C361.

Belongs to the aconitase/IPM isomerase family. LeuC type 2 subfamily. In terms of assembly, heterodimer of LeuC and LeuD. Requires [4Fe-4S] cluster as cofactor.

It carries out the reaction (2R,3S)-3-isopropylmalate = (2S)-2-isopropylmalate. Its pathway is amino-acid biosynthesis; L-leucine biosynthesis; L-leucine from 3-methyl-2-oxobutanoate: step 2/4. Its function is as follows. Catalyzes the isomerization between 2-isopropylmalate and 3-isopropylmalate, via the formation of 2-isopropylmaleate. This is 3-isopropylmalate dehydratase large subunit 2 from Thermotoga maritima (strain ATCC 43589 / DSM 3109 / JCM 10099 / NBRC 100826 / MSB8).